We begin with the raw amino-acid sequence, 710 residues long: Polyribonucleotide nucleotidyltransferase (710 aa).

Asp487 and Asp493 together coordinate Mg(2+). The KH domain maps to 554-613; that stretch reads PRIEVMNIPVDKIREVIGSGGKVIREIVEKTGAKINIEDDGTVKIASSSGKEIEAARKWI. Residues 623–691 enclose the S1 motif domain; sequence GQIYEGTVVK…ERGKVRLSMK (69 aa).

Belongs to the polyribonucleotide nucleotidyltransferase family. The cofactor is Mg(2+).

It localises to the cytoplasm. It catalyses the reaction RNA(n+1) + phosphate = RNA(n) + a ribonucleoside 5'-diphosphate. In terms of biological role, involved in mRNA degradation. Catalyzes the phosphorolysis of single-stranded polyribonucleotides processively in the 3'- to 5'-direction. The chain is Polyribonucleotide nucleotidyltransferase from Rhizobium rhizogenes (strain K84 / ATCC BAA-868) (Agrobacterium radiobacter).